The sequence spans 165 residues: UPF0254 protein MMP0935 (165 aa).

It belongs to the UPF0254 family.

This is UPF0254 protein MMP0935 from Methanococcus maripaludis (strain DSM 14266 / JCM 13030 / NBRC 101832 / S2 / LL).